Here is a 542-residue protein sequence, read N- to C-terminus: Propane 2-monooxygenase, hydroxylase component large subunit (542 aa).

The Fe cation site is built by E97, E127, H130, E192, E226, and H229.

The protein belongs to the TmoA/XamoA family. As to quaternary structure, the propane 2-monooxygenase multicomponent enzyme system is composed of an electron transfer component and a monooxygenase component interacting with the effector protein MimD. The electron transfer component is composed of a reductase (MimB), and the monooxygenase component is formed by a large subunit (MimA) and a small subunit (MimC). Requires the presence of the chaperonin-like protein MimG to ensure a productive folding, resulting of a soluble MimA, which leads to the active form of MimABCD. The cofactor is Fe(2+).

The catalysed reaction is propane + NADH + O2 + H(+) = propan-2-ol + NAD(+) + H2O. It carries out the reaction acetone + NADH + O2 + H(+) = hydroxyacetone + NAD(+) + H2O. It catalyses the reaction butan-2-one + NADH + O2 + H(+) = 1-hydroxy-2-butanone + NAD(+) + H2O. The enzyme catalyses phenol + NADH + O2 + H(+) = hydroquinone + NAD(+) + H2O. Its function is as follows. Component of the propane 2-monooxygenase multicomponent enzyme system which is involved in the degradation of propane via the O2-dependent hydroxylation of propane. Also involved in the degradation of acetone via the O2-dependent hydroxylation of acetone. Also able to catalyze the oxidation of phenol, methylethylketone (2-butanone), 1-propanol and 2-propanol. This chain is Propane 2-monooxygenase, hydroxylase component large subunit, found in Mycolicibacterium goodii (Mycobacterium goodii).